We begin with the raw amino-acid sequence, 98 residues long: MSYIPGQPVTAVVQRVEIHKLRQGENLILGFSIGGGIDQDPSQNPFSEDKTDKVNGWDMTMVTHDQARKRLTKRSEEVVRLLVTRQSLQKAVQQSMLS.

Position 2 is an N-acetylserine (Ser2). The PDZ domain occupies 12–87 (VVQRVEIHKL…VVRLLVTRQS (76 aa)).

Interacts (via its PDZ domain) with GLS2. Interacts (via its PDZ domain) with RTKN (via the C-terminal region); this interaction facilitates Rho-mediated activation of the FOS serum response element (SRE). Interacts (via PDZ domain) with ARHGEF16. Interacts (via PDZ domain) with KCNJ4 (via C-terminus). Competes with LIN7A for KCNJ4 binding. Interacts (via its PDZ domain) with CTNNB1; this interaction inhibits the transcriptional activity of CTNNB1. Interacts with ADGRB2. As to expression, detected in kidney distal convoluted tubules (at protein level).

The protein localises to the cytoplasm. Its subcellular location is the nucleus. It localises to the cell membrane. May regulate a number of protein-protein interactions by competing for PDZ domain binding sites. Binds CTNNB1 and may thereby act as an inhibitor of the Wnt signaling pathway. Competes with LIN7A for KCNJ4 binding, and thereby promotes KCNJ4 internalization. May play a role in the Rho signaling pathway. The polypeptide is Tax1-binding protein 3 (Rattus norvegicus (Rat)).